We begin with the raw amino-acid sequence, 251 residues long: tRNA (guanine-N(1)-)-methyltransferase (251 aa).

S-adenosyl-L-methionine is bound by residues G111 and 131-136; that span reads LGDFVL.

The protein belongs to the RNA methyltransferase TrmD family. As to quaternary structure, homodimer.

It is found in the cytoplasm. The enzyme catalyses guanosine(37) in tRNA + S-adenosyl-L-methionine = N(1)-methylguanosine(37) in tRNA + S-adenosyl-L-homocysteine + H(+). Its function is as follows. Specifically methylates guanosine-37 in various tRNAs. This Synechococcus sp. (strain JA-2-3B'a(2-13)) (Cyanobacteria bacterium Yellowstone B-Prime) protein is tRNA (guanine-N(1)-)-methyltransferase.